The primary structure comprises 347 residues: MALQRSNLEEFLTQTWAQRGLAACMLLPVSAVFGGLSALRRAAYRLGLSKSERLPVPVVVVGNIFVGGTGKTPLTIWLVHVLRQAGYTPGVISRGYGVHNDVPQAVTPQSLAQEVGDEPLLIAYRAECPVMVGRDRVAVATALLAAHPEVDVLLSDDGLQHYRMARDVEIVLFDGRGAGNGWLLPAGPLREPVSRRRDFTVLNGAADAPGLPPDAIRMQLVGMTAEKLNDRSQTSALSSFAASDGKHAPTILAAAGIGNPGRFFGLLRSAGLQFEEMALPDHYDFADNPFAHVKADVILITEKDAVKCRQNEGLRNDTRLWVVPVTAQLDGALAEKIVEKLRGRSIA.

ATP is bound at residue 65 to 72 (FVGGTGKT).

The protein belongs to the LpxK family.

It carries out the reaction a lipid A disaccharide + ATP = a lipid IVA + ADP + H(+). It participates in glycolipid biosynthesis; lipid IV(A) biosynthesis; lipid IV(A) from (3R)-3-hydroxytetradecanoyl-[acyl-carrier-protein] and UDP-N-acetyl-alpha-D-glucosamine: step 6/6. In terms of biological role, transfers the gamma-phosphate of ATP to the 4'-position of a tetraacyldisaccharide 1-phosphate intermediate (termed DS-1-P) to form tetraacyldisaccharide 1,4'-bis-phosphate (lipid IVA). This chain is Tetraacyldisaccharide 4'-kinase, found in Janthinobacterium sp. (strain Marseille) (Minibacterium massiliensis).